The primary structure comprises 130 residues: Small ribosomal subunit protein uS9 (130 aa).

Residues 102–130 form a disordered region; that stretch reads GFLTRDPRMKERKKYGLKKARRSPQFSKR. Residues 111-130 are compositionally biased toward basic residues; that stretch reads KERKKYGLKKARRSPQFSKR.

Belongs to the universal ribosomal protein uS9 family.

The chain is Small ribosomal subunit protein uS9 from Clostridium botulinum (strain ATCC 19397 / Type A).